A 440-amino-acid polypeptide reads, in one-letter code: Chromosomal replication initiator protein DnaA (440 aa).

The segment at 1–72 (MTELDSLWEA…KEFAQRELGR (72 aa)) is domain I, interacts with DnaA modulators. Residues 72–103 (RNIEPHYVLEGEFTYTNKKTEDDPTPSFEMDT) are domain II. Residues 104–320 (PLNPHYNFGT…GALTKVQAFA (217 aa)) are domain III, AAA+ region. The ATP site is built by Gly148, Gly150, Lys151, and Thr152. The segment at 321–440 (NLSGERITPS…ITKLKAKLRS (120 aa)) is domain IV, binds dsDNA.

It belongs to the DnaA family. As to quaternary structure, oligomerizes as a right-handed, spiral filament on DNA at oriC.

The protein resides in the cytoplasm. Functionally, plays an essential role in the initiation and regulation of chromosomal replication. ATP-DnaA binds to the origin of replication (oriC) to initiate formation of the DNA replication initiation complex once per cell cycle. Binds the DnaA box (a 9 base pair repeat at the origin) and separates the double-stranded (ds)DNA. Forms a right-handed helical filament on oriC DNA; dsDNA binds to the exterior of the filament while single-stranded (ss)DNA is stabiized in the filament's interior. The ATP-DnaA-oriC complex binds and stabilizes one strand of the AT-rich DNA unwinding element (DUE), permitting loading of DNA polymerase. After initiation quickly degrades to an ADP-DnaA complex that is not apt for DNA replication. Binds acidic phospholipids. In Limosilactobacillus reuteri (strain DSM 20016) (Lactobacillus reuteri), this protein is Chromosomal replication initiator protein DnaA.